Reading from the N-terminus, the 274-residue chain is Nitrogenase iron protein (274 aa).

8 to 15 is a binding site for ATP; it reads GKGGIGKS. Residue Cys-94 participates in [4Fe-4S] cluster binding. Residue Arg-97 is modified to ADP-ribosylarginine; by dinitrogenase reductase ADP-ribosyltransferase. Cys-131 provides a ligand contact to [4Fe-4S] cluster.

It belongs to the NifH/BchL/ChlL family. As to quaternary structure, homodimer. [4Fe-4S] cluster is required as a cofactor. The reversible ADP-ribosylation of Arg-97 inactivates the nitrogenase reductase and regulates nitrogenase activity.

It carries out the reaction N2 + 8 reduced [2Fe-2S]-[ferredoxin] + 16 ATP + 16 H2O = H2 + 8 oxidized [2Fe-2S]-[ferredoxin] + 2 NH4(+) + 16 ADP + 16 phosphate + 6 H(+). The key enzymatic reactions in nitrogen fixation are catalyzed by the nitrogenase complex, which has 2 components: the iron protein and the molybdenum-iron protein. This is Nitrogenase iron protein from Azobacteroides pseudotrichonymphae genomovar. CFP2.